Here is a 103-residue protein sequence, read N- to C-terminus: Small ribosomal subunit protein uS10 (103 aa).

It belongs to the universal ribosomal protein uS10 family. In terms of assembly, part of the 30S ribosomal subunit.

Involved in the binding of tRNA to the ribosomes. The polypeptide is Small ribosomal subunit protein uS10 (Magnetococcus marinus (strain ATCC BAA-1437 / JCM 17883 / MC-1)).